We begin with the raw amino-acid sequence, 126 residues long: Aspartate 1-decarboxylase (126 aa).

Serine 25 (schiff-base intermediate with substrate; via pyruvic acid) is an active-site residue. Serine 25 is subject to Pyruvic acid (Ser). Threonine 57 provides a ligand contact to substrate. Tyrosine 58 functions as the Proton donor in the catalytic mechanism. Position 73 to 75 (73 to 75 (GAA)) interacts with substrate.

This sequence belongs to the PanD family. Heterooctamer of four alpha and four beta subunits. The cofactor is pyruvate. Is synthesized initially as an inactive proenzyme, which is activated by self-cleavage at a specific serine bond to produce a beta-subunit with a hydroxyl group at its C-terminus and an alpha-subunit with a pyruvoyl group at its N-terminus.

It localises to the cytoplasm. The enzyme catalyses L-aspartate + H(+) = beta-alanine + CO2. It participates in cofactor biosynthesis; (R)-pantothenate biosynthesis; beta-alanine from L-aspartate: step 1/1. Catalyzes the pyruvoyl-dependent decarboxylation of aspartate to produce beta-alanine. The sequence is that of Aspartate 1-decarboxylase from Salmonella choleraesuis (strain SC-B67).